The sequence spans 414 residues: Probable cytochrome P450 127A1 (414 aa).

Cys-364 lines the heme pocket.

It belongs to the cytochrome P450 family. Requires heme as cofactor.

In terms of biological role, cytochromes P450 are a group of heme-thiolate monooxygenases. They oxidize a variety of structurally unrelated compounds, including steroids, fatty acids, and xenobiotics. This is Probable cytochrome P450 127A1 (cyp127A1) from Sinorhizobium fredii (strain NBRC 101917 / NGR234).